The primary structure comprises 430 residues: MDRIRIVGGNELNGIIPISGAKNAALPLMIASLLTSDTLTLENVPHLADVELLMRILGNHGVDVAVNGRRERQEDSYSRTIHFTCRTIVDTTASYELVSKMRASFWVIGPLLAREGHCRVSLPGGCAIGTRPVDLFIEGLTALGATMEIDAGYINAKAPAGGLIGARYTFPKVSVGATHVMMMAATLARGTTVIGNAAREPEVVDLANCLNAMGAKITGAGTATITIEGVTSLSGARHRVLPDRIETGTYAMAVAMAGGDVVLENTDVALLETAVETLRRAGAEISSTNNGMRIKRNGAGIRPVDIVTDPFPGFPTDLQAQFMALMTRSSGVSHVTETIFENRFMHVQELARLGARISLSGQTAKIEGVQRLRGAPVMATDLRASVSLVIAGLAAEGETTVSRVYHLDRGFERLEEKLTRCGAIVERISE.

Residue 22–23 participates in phosphoenolpyruvate binding; that stretch reads KN. Arg102 is a binding site for UDP-N-acetyl-alpha-D-glucosamine. Residue Cys126 is the Proton donor of the active site. Cys126 carries the 2-(S-cysteinyl)pyruvic acid O-phosphothioketal modification. UDP-N-acetyl-alpha-D-glucosamine-binding positions include 131-135, 172-175, Asp317, and Ile339; these read RPVDL and KVSV.

The protein belongs to the EPSP synthase family. MurA subfamily.

It localises to the cytoplasm. It carries out the reaction phosphoenolpyruvate + UDP-N-acetyl-alpha-D-glucosamine = UDP-N-acetyl-3-O-(1-carboxyvinyl)-alpha-D-glucosamine + phosphate. Its pathway is cell wall biogenesis; peptidoglycan biosynthesis. Its function is as follows. Cell wall formation. Adds enolpyruvyl to UDP-N-acetylglucosamine. The chain is UDP-N-acetylglucosamine 1-carboxyvinyltransferase from Rhizobium johnstonii (strain DSM 114642 / LMG 32736 / 3841) (Rhizobium leguminosarum bv. viciae).